An 87-amino-acid polypeptide reads, in one-letter code: Stannin (87 aa).

Topologically, residues 1–10 are mitochondrial intermembrane; that stretch reads MSIMDHSPTT. Residues 11 to 31 form a helical membrane-spanning segment; the sequence is GVVTVIVILIAIAALGALILG. The Cytoplasmic portion of the chain corresponds to 32 to 87; sequence CWCYLRLQRISQSEDEESIVGDGETKEPFLLVQYSAKGPCVERKAKLTPNGPEVHS. Serine 49 carries the phosphoserine modification.

It belongs to the stannin family. As to quaternary structure, monomer.

The protein resides in the mitochondrion outer membrane. Plays a role in the toxic effects of organotins. Plays a role in endosomal maturation. This is Stannin (SNN) from Bos taurus (Bovine).